The sequence spans 158 residues: uncharacterized protein (158 aa).

The protein localises to the mitochondrion. This is an uncharacterized protein from Arabidopsis thaliana (Mouse-ear cress).